Consider the following 71-residue polypeptide: Small ribosomal subunit protein bS18 (71 aa).

Belongs to the bacterial ribosomal protein bS18 family. In terms of assembly, part of the 30S ribosomal subunit. Forms a tight heterodimer with protein bS6.

Functionally, binds as a heterodimer with protein bS6 to the central domain of the 16S rRNA, where it helps stabilize the platform of the 30S subunit. This Synechococcus sp. (strain JA-2-3B'a(2-13)) (Cyanobacteria bacterium Yellowstone B-Prime) protein is Small ribosomal subunit protein bS18.